Here is a 459-residue protein sequence, read N- to C-terminus: Glutamate--tRNA ligase 2 (459 aa).

Residues 8-18 (PSPTGYIHIGN) carry the 'HIGH' region motif. A 'KMSKS' region motif is present at residues 249–253 (GLSKR). Residue lysine 252 participates in ATP binding.

The protein belongs to the class-I aminoacyl-tRNA synthetase family. Glutamate--tRNA ligase type 1 subfamily. Monomer.

The protein resides in the cytoplasm. It carries out the reaction tRNA(Glu) + L-glutamate + ATP = L-glutamyl-tRNA(Glu) + AMP + diphosphate. Functionally, catalyzes the attachment of glutamate to tRNA(Glu) in a two-step reaction: glutamate is first activated by ATP to form Glu-AMP and then transferred to the acceptor end of tRNA(Glu). In Bartonella henselae (strain ATCC 49882 / DSM 28221 / CCUG 30454 / Houston 1) (Rochalimaea henselae), this protein is Glutamate--tRNA ligase 2.